The following is a 238-amino-acid chain: MSETADTNQTAVVLFSGGQDSTTCLAWALARYHRVHTVAFDYGQRHRVELACRQRVREAIGQHFAGWGARLGEDHLLDLTSLGEISDTSLTRERAIEIRDSGLPDTFVPGRNLLFLTYAAALAWRLQARHLITGVCETDYSGYPDCRDDTIKALQVALNLGMDSHFVLHTPLMWRDKAQTWALAETLGGADLVELIAEHTHTCYLGDRTQRHDWGYGCGECPACRLRAQGWRRHRGLC.

15 to 25 serves as a coordination point for ATP; sequence FSGGQDSTTCL. Residues Cys-203, Cys-218, Cys-221, and Cys-224 each coordinate Zn(2+).

This sequence belongs to the QueC family. Requires Zn(2+) as cofactor.

The enzyme catalyses 7-carboxy-7-deazaguanine + NH4(+) + ATP = 7-cyano-7-deazaguanine + ADP + phosphate + H2O + H(+). The protein operates within purine metabolism; 7-cyano-7-deazaguanine biosynthesis. In terms of biological role, catalyzes the ATP-dependent conversion of 7-carboxy-7-deazaguanine (CDG) to 7-cyano-7-deazaguanine (preQ(0)). The protein is 7-cyano-7-deazaguanine synthase of Alkalilimnicola ehrlichii (strain ATCC BAA-1101 / DSM 17681 / MLHE-1).